We begin with the raw amino-acid sequence, 367 residues long: S-adenosylmethionine:tRNA ribosyltransferase-isomerase (367 aa).

The interval 150 to 182 is disordered; sequence RHGEEEESSDEAISSQNPEIATESKRTPSNDDK. The span at 171–182 shows a compositional bias: basic and acidic residues; it reads TESKRTPSNDDK.

The protein belongs to the QueA family. Monomer.

The protein localises to the cytoplasm. The catalysed reaction is 7-aminomethyl-7-carbaguanosine(34) in tRNA + S-adenosyl-L-methionine = epoxyqueuosine(34) in tRNA + adenine + L-methionine + 2 H(+). The protein operates within tRNA modification; tRNA-queuosine biosynthesis. Transfers and isomerizes the ribose moiety from AdoMet to the 7-aminomethyl group of 7-deazaguanine (preQ1-tRNA) to give epoxyqueuosine (oQ-tRNA). This is S-adenosylmethionine:tRNA ribosyltransferase-isomerase from Rickettsia felis (strain ATCC VR-1525 / URRWXCal2) (Rickettsia azadi).